The chain runs to 105 residues: Serine protease inhibitor Kazal-type 6 (105 aa).

Residues 1 to 23 (MKVAGVFLLLSLALLCFFSGEFS) form the signal peptide. Position 24 is a pyrrolidone carboxylic acid (glutamine 24). In terms of domain architecture, Kazal-like spans 49-105 (RLFQINCGEFRDPKVFCTRESDPLCGSDGQTYGNKCAFCKALEKSSGKINLKHRGKC). Intrachain disulfides connect cysteine 55-cysteine 87, cysteine 65-cysteine 84, and cysteine 73-cysteine 105.

Its subcellular location is the secreted. In terms of biological role, serine protease inhibitor selective for kallikreins. Efficiently inhibits KLK4, KLK5, KLK6, KLK7, KLK12, KLK13 and KLK14. Doesn't inhibit KLK8. In Rattus norvegicus (Rat), this protein is Serine protease inhibitor Kazal-type 6 (Spink6).